The sequence spans 259 residues: Protein BEAN1 (259 aa).

A helical transmembrane segment spans residues 36–56; that stretch reads VLVASAVIGVVIILSCITIIV. Residues 71–89 are compositionally biased toward basic residues; the sequence is RHRHHRHHHHHHHHRRRRH. Disordered regions lie at residues 71–91 and 152–259; these read RHRHHRHHHHHHHHRRRRHRE and VGPG…ERIV. The span at 171 to 187 shows a compositional bias: polar residues; it reads LTDSCPTLDGTSDSGSG. Residues 221 to 230 are compositionally biased toward low complexity; the sequence is GAGPPSGLLP.

In terms of assembly, interacts with NEDD4.

It localises to the membrane. This chain is Protein BEAN1 (BEAN1), found in Homo sapiens (Human).